Consider the following 545-residue polypeptide: Capsular polysaccharide phosphotransferase SacB (545 aa).

Belongs to the stealth family.

In terms of biological role, may be the polymerase that links individual UDP-N-acetyl-D-mannosamine monomers. In serotype A the capsule is composed of repeated units of (alpha 1-6)-linked N-acetyl-D-mannosamine-1-phosphate. The chain is Capsular polysaccharide phosphotransferase SacB (sacB) from Neisseria meningitidis serogroup A.